The chain runs to 1082 residues: Protein argonaute 1A (1082 aa).

Disordered stretches follow at residues 17–148 (MMRK…ASQD) and 187–208 (GQSPTSQAIQPAPPSSKSVRFP). Over residues 29–38 (GESSGTQQAT) the composition is skewed to polar residues. The span at 72–100 (GRGGGQHQGRGGRYQGRGGPTSHQPGGGP) shows a compositional bias: gly residues. The region spanning 420 to 533 (PVIDFVAQLL…LPMEVCKIVE (114 aa)) is the PAZ domain. Positions 709-1030 (LLIAILPDNN…AAFRARFYME (322 aa)) constitute a Piwi domain. Residues 1036–1065 (SGSMASGAHTRGGGPLPGARSTKPAGNVAV) form a disordered region.

This sequence belongs to the argonaute family. Ago subfamily.

Probably involved in the RNA silencing pathway. May bind to short RNAs such as microRNAs (miRNAs) or short interfering RNAs (siRNAs), and represses the translation of mRNAs which are complementary to them. This is Protein argonaute 1A (AGO1A) from Oryza sativa subsp. japonica (Rice).